Here is a 304-residue protein sequence, read N- to C-terminus: Coenzyme PQQ synthesis protein B (304 aa).

Belongs to the PqqB family.

The protein operates within cofactor biosynthesis; pyrroloquinoline quinone biosynthesis. Its function is as follows. May be involved in the transport of PQQ or its precursor to the periplasm. The sequence is that of Coenzyme PQQ synthesis protein B from Pseudomonas paraeruginosa (strain DSM 24068 / PA7) (Pseudomonas aeruginosa (strain PA7)).